We begin with the raw amino-acid sequence, 362 residues long: Atypical chemokine receptor 3 (362 aa).

Topologically, residues 1–40 (MDLHLFDYSEPGNFSDISWPCNSSDCIVVDTVMCPNMPNK) are extracellular. Residues asparagine 13, asparagine 22, and asparagine 39 are each glycosylated (N-linked (GlcNAc...) asparagine). The chain crosses the membrane as a helical span at residues 41–61 (SVLLYTLSFIYIFIFVIGMIA). At 62–81 (NSVVVWVNIQAKTTGYDTHC) the chain is on the cytoplasmic side. A helical membrane pass occupies residues 82-102 (YILNLAIADLWVVLTIPVWVV). The Extracellular portion of the chain corresponds to 103-118 (SLVQHNQWPMGELTCK). A disulfide bridge links cysteine 117 with cysteine 196. Residues 119-139 (VTHLIFSINLFGSIFFLTCMS) form a helical membrane-spanning segment. Topologically, residues 140 to 162 (VDRYLSITYFTNTPSSRKKMVRR) are cytoplasmic. Residues 163–183 (VVCILVWLLAFCVSLPDTYYL) form a helical membrane-spanning segment. Topologically, residues 184-213 (KTVTSASNNETYCRSFYPEHSIKEWLIGME) are extracellular. The helical transmembrane segment at 214 to 234 (LVSVVLGFAVPFSIIAVFYFL) threads the bilayer. At 235 to 252 (LARAISASSDQEKHSSRK) the chain is on the cytoplasmic side. The helical transmembrane segment at 253-273 (IIFSYVVVFLVCWLPYHVAVL) threads the bilayer. Residues 274–296 (LDIFSILHYIPFTCRLEHALFTA) are Extracellular-facing. Residues 297–319 (LHVTQCLSLVHCCVNPVLYSFIN) form a helical membrane-spanning segment. Residues 320-362 (RNYRYELMKAFIFKYSAKTGLTKLIDASRVSETEYSALEQSTK) lie on the Cytoplasmic side of the membrane. Residues 324–362 (YELMKAFIFKYSAKTGLTKLIDASRVSETEYSALEQSTK) are C-terminal cytoplasmic tail. Phosphoserine is present on residues serine 347, serine 350, and serine 355.

It belongs to the G-protein coupled receptor 1 family. Atypical chemokine receptor subfamily. Homodimer. Can form heterodimers with CXCR4; heterodimerization may regulate CXCR4 signaling activity. Interacts with ARRB1 and ARRB2. In terms of processing, the Ser/Thr residues in the C-terminal cytoplasmic tail may be phosphorylated. Post-translationally, ubiquitinated at the Lys residues in its C-terminal cytoplasmic tail and is essential for correct trafficking from and to the cell membrane. Deubiquitinated by CXCL12-stimulation in a reversible manner. In terms of tissue distribution, expressed in monocytes, basophils, B-cells, umbilical vein endothelial cells (HUVEC) and B-lymphoblastoid cells. Lower expression detected in CD4+ T-lymphocytes and natural killer cells. In the brain, detected in endothelial cells and capillaries, and in mature neurons of the frontal cortex and hippocampus. Expressed in tubular formation in the kidney. Highly expressed in astroglial tumor endothelial, microglial and glioma cells. Expressed at low levels in normal CD34+ progenitor cells, but at very high levels in several myeloid malignant cell lines. Expressed in breast carcinomas but not in normal breast tissue (at protein level).

The protein localises to the cell membrane. It localises to the early endosome. The protein resides in the recycling endosome. Functionally, atypical chemokine receptor that controls chemokine levels and localization via high-affinity chemokine binding that is uncoupled from classic ligand-driven signal transduction cascades, resulting instead in chemokine sequestration, degradation, or transcytosis. Also known as interceptor (internalizing receptor) or chemokine-scavenging receptor or chemokine decoy receptor. Acts as a receptor for chemokines CXCL11 and CXCL12/SDF1. Chemokine binding does not activate G-protein-mediated signal transduction but instead induces beta-arrestin recruitment, leading to ligand internalization and activation of MAPK signaling pathway. Required for regulation of CXCR4 protein levels in migrating interneurons, thereby adapting their chemokine responsiveness. In glioma cells, transduces signals via MEK/ERK pathway, mediating resistance to apoptosis. Promotes cell growth and survival. Not involved in cell migration, adhesion or proliferation of normal hematopoietic progenitors but activated by CXCL11 in malignant hemapoietic cells, leading to phosphorylation of ERK1/2 (MAPK3/MAPK1) and enhanced cell adhesion and migration. Plays a regulatory role in CXCR4-mediated activation of cell surface integrins by CXCL12. Required for heart valve development. Regulates axon guidance in the oculomotor system through the regulation of CXCL12 levels. (Microbial infection) Acts as a coreceptor with CXCR4 for a restricted number of HIV isolates. This is Atypical chemokine receptor 3 from Homo sapiens (Human).